The sequence spans 137 residues: Small ribosomal subunit protein uS12 (137 aa).

The interval 1–57 (MPTINQLVRKPRKSKVEKSKSPALNVGYNSRKKVQTNVSSPQKRGVATRVGTMTPKK) is disordered. Aspartate 102 is subject to 3-methylthioaspartic acid.

Belongs to the universal ribosomal protein uS12 family. In terms of assembly, part of the 30S ribosomal subunit. Contacts proteins S8 and S17. May interact with IF1 in the 30S initiation complex.

Functionally, with S4 and S5 plays an important role in translational accuracy. In terms of biological role, interacts with and stabilizes bases of the 16S rRNA that are involved in tRNA selection in the A site and with the mRNA backbone. Located at the interface of the 30S and 50S subunits, it traverses the body of the 30S subunit contacting proteins on the other side and probably holding the rRNA structure together. The combined cluster of proteins S8, S12 and S17 appears to hold together the shoulder and platform of the 30S subunit. The chain is Small ribosomal subunit protein uS12 from Streptococcus suis (strain 98HAH33).